The following is a 67-amino-acid chain: Moricin (67 aa).

Positions 1–23 (MKLTSLFIFVIVALSLLFSSTDA) are cleaved as a signal peptide.

This sequence belongs to the moricin family. In terms of assembly, monomer.

It localises to the secreted. In terms of biological role, antimicrobial peptide. Active against a broad spectrum of Gram-positive and Gram-negative bacteria including methicillin-resistant S.aureus ATCC 43 300, S.aureus BAA-39, pathogenic strains of L.monocytogenes, K.pneumoniae, E.coli O157:H7, S.typhimurium and multidrug-resistant S.typhimurium DT104 with minimum inhibitory concentration (MIC) of 1.4 uM for all except for S.aureus BAA-39. Also active against Serratia marcescens. Probably acts by disturbing membrane functions with its amphipathic alpha-helical structure. May protect a developing embryo from bacterial infection. This is Moricin from Manduca sexta (Tobacco hawkmoth).